The following is a 245-amino-acid chain: MNNYKLTIQYDGARFKGWQRLGNNDNTIQGKIESVISEMVGKETEIIGCSRTDAGVHALNQVANFQSDEKLVEHKVKKYLNQYLPNDISITNVEEVHDRFHARYNSKAKTYLYKIWNEEHTNPFMRKYSMHVNKKLNVKSMKEAAKHLVGSHDFTAFSNAKSKKKSMVREVYSLEVMEEAGFVQIRVSGNGFLHNMVRKIVGALIEVGLGQLAAEAIPQILEAKQRNQINCLAEASGLYLENVEF.

Residue aspartate 53 is the Nucleophile of the active site. Tyrosine 111 provides a ligand contact to substrate.

It belongs to the tRNA pseudouridine synthase TruA family. Homodimer.

The catalysed reaction is uridine(38/39/40) in tRNA = pseudouridine(38/39/40) in tRNA. Its function is as follows. Formation of pseudouridine at positions 38, 39 and 40 in the anticodon stem and loop of transfer RNAs. The sequence is that of tRNA pseudouridine synthase A 2 from Bacillus anthracis.